The sequence spans 295 residues: Protein FAM110A (295 aa).

Disordered stretches follow at residues 117-148 (PVSP…PPSI) and 160-191 (PASP…KSDL). Composition is skewed to pro residues over residues 138 to 147 (LATPPRPPPS) and 160 to 171 (PASPIQPCPSPG).

The protein belongs to the FAM110 family. In terms of assembly, may interact with CSPP1.

Its subcellular location is the cytoplasm. It is found in the cytoskeleton. The protein resides in the microtubule organizing center. It localises to the centrosome. The protein localises to the spindle pole. This Bos taurus (Bovine) protein is Protein FAM110A (FAM110A).